A 376-amino-acid chain; its full sequence is E3 ubiquitin-protein ligase RNF34 (376 aa).

Residues 56-107 (EGPNIVCKACGLSFSVFRKKHVCCDCKKDFCSLCSVSQENLRRCSTCHLLQE) form an FYVE-type zinc finger. Residues 115–134 (LMRLKVKDLRQYLLLRNIPT) enclose the SAP 1 domain. Phosphoserine is present on serine 169. The disordered stretch occupies residues 216–256 (IASANTDDDDDDDDDDDDDEDDDDEQEEEEQNPGLSKKKAR). Positions 221-246 (TDDDDDDDDDDDDDEDDDDEQEEEEQ) are enriched in acidic residues. A phosphoserine mark is found at serine 258 and serine 260. Residues 268-282 (VEGMSVRQLKEILAR) form the SAP 2 domain. The RING-type zinc finger occupies 329–364 (CRICMDAVIDCVLLECGHMVTCTKCGKRMSECPICR).

Interacts with CASP8 and CASP10. Interacts with p53/TP53; involved in p53/TP53 ubiquitination. Interacts (via RING-type zinc finger) with MDM2; the interaction stabilizes MDM2. Interacts (via RING-type zinc finger) with PPARGC1A. Interacts with NOD1. Autoubiquitinated (in vitro). Post-translationally, proteolytically cleaved by caspases upon induction of apoptosis by TNF.

Its subcellular location is the cell membrane. It localises to the endomembrane system. The protein resides in the nucleus. It is found in the nucleus speckle. The protein localises to the cytoplasm. Its subcellular location is the cytosol. The catalysed reaction is S-ubiquitinyl-[E2 ubiquitin-conjugating enzyme]-L-cysteine + [acceptor protein]-L-lysine = [E2 ubiquitin-conjugating enzyme]-L-cysteine + N(6)-ubiquitinyl-[acceptor protein]-L-lysine.. It participates in protein modification; protein ubiquitination. Functionally, E3 ubiquitin-protein ligase that regulates several biological processes through the ubiquitin-mediated proteasomal degradation of various target proteins. Ubiquitinates the caspases CASP8 and CASP10, promoting their proteasomal degradation, to negatively regulate cell death downstream of death domain receptors in the extrinsic pathway of apoptosis. May mediate 'Lys-48'-linked polyubiquitination of RIPK1 and its subsequent proteasomal degradation thereby indirectly regulating the tumor necrosis factor-mediated signaling pathway. Negatively regulates p53/TP53 through its direct ubiquitination and targeting to proteasomal degradation. Indirectly, may also negatively regulate p53/TP53 through ubiquitination and degradation of SFN. Mediates PPARGC1A proteasomal degradation probably through ubiquitination thereby indirectly regulating the metabolism of brown fat cells. Possibly involved in innate immunity, through 'Lys-48'-linked polyubiquitination of NOD1 and its subsequent proteasomal degradation. The polypeptide is E3 ubiquitin-protein ligase RNF34 (Mus musculus (Mouse)).